A 253-amino-acid chain; its full sequence is Imidazole glycerol phosphate synthase subunit HisF (253 aa).

Active-site residues include aspartate 11 and aspartate 130.

It belongs to the HisA/HisF family. In terms of assembly, heterodimer of HisH and HisF.

The protein localises to the cytoplasm. It catalyses the reaction 5-[(5-phospho-1-deoxy-D-ribulos-1-ylimino)methylamino]-1-(5-phospho-beta-D-ribosyl)imidazole-4-carboxamide + L-glutamine = D-erythro-1-(imidazol-4-yl)glycerol 3-phosphate + 5-amino-1-(5-phospho-beta-D-ribosyl)imidazole-4-carboxamide + L-glutamate + H(+). The protein operates within amino-acid biosynthesis; L-histidine biosynthesis; L-histidine from 5-phospho-alpha-D-ribose 1-diphosphate: step 5/9. IGPS catalyzes the conversion of PRFAR and glutamine to IGP, AICAR and glutamate. The HisF subunit catalyzes the cyclization activity that produces IGP and AICAR from PRFAR using the ammonia provided by the HisH subunit. This chain is Imidazole glycerol phosphate synthase subunit HisF, found in Thermotoga sp. (strain RQ2).